Here is a 360-residue protein sequence, read N- to C-terminus: Photosystem II protein D1 (360 aa).

The next 3 membrane-spanning stretches (helical) occupy residues 29–46 (YIGW…TATS), 118–133 (HFFI…EWEL), and 142–156 (WIAV…AATA). H118 provides a ligand contact to chlorophyll a. Y126 provides a ligand contact to pheophytin a. [CaMn4O5] cluster contacts are provided by D170 and E189. Residues 197-218 (FHMMGVAGVFGGSLFSAMHGSL) form a helical membrane-spanning segment. H198 serves as a coordination point for chlorophyll a. A quinone is bound by residues H215 and 264–265 (SF). H215 lines the Fe cation pocket. H272 contacts Fe cation. A helical membrane pass occupies residues 274 to 288 (FLALWPVVCICVTAL). The [CaMn4O5] cluster site is built by H332, E333, D342, and A344. Positions 345–360 (SEVSLPVALNKVEING) are excised as a propeptide.

Belongs to the reaction center PufL/M/PsbA/D family. As to quaternary structure, PSII is composed of 1 copy each of membrane proteins PsbA, PsbB, PsbC, PsbD, PsbE, PsbF, PsbH, PsbI, PsbJ, PsbK, PsbL, PsbM, PsbT, PsbY, PsbZ, Psb30/Ycf12, at least 3 peripheral proteins of the oxygen-evolving complex and a large number of cofactors. It forms dimeric complexes. Requires The D1/D2 heterodimer binds P680, chlorophylls that are the primary electron donor of PSII, and subsequent electron acceptors. It shares a non-heme iron and each subunit binds pheophytin, quinone, additional chlorophylls, carotenoids and lipids. D1 provides most of the ligands for the Mn4-Ca-O5 cluster of the oxygen-evolving complex (OEC). There is also a Cl(-1) ion associated with D1 and D2, which is required for oxygen evolution. The PSII complex binds additional chlorophylls, carotenoids and specific lipids. as cofactor. Post-translationally, tyr-161 forms a radical intermediate that is referred to as redox-active TyrZ, YZ or Y-Z. In terms of processing, C-terminally processed by CTPA; processing is essential to allow assembly of the oxygen-evolving complex and thus photosynthetic growth.

The protein resides in the plastid. It localises to the chloroplast thylakoid membrane. It carries out the reaction 2 a plastoquinone + 4 hnu + 2 H2O = 2 a plastoquinol + O2. Functionally, photosystem II (PSII) is a light-driven water:plastoquinone oxidoreductase that uses light energy to abstract electrons from H(2)O, generating O(2) and a proton gradient subsequently used for ATP formation. It consists of a core antenna complex that captures photons, and an electron transfer chain that converts photonic excitation into a charge separation. The D1/D2 (PsbA/PsbD) reaction center heterodimer binds P680, the primary electron donor of PSII as well as several subsequent electron acceptors. This is Photosystem II protein D1 from Galdieria sulphuraria (Red alga).